The primary structure comprises 592 residues: Aspartate--tRNA(Asp/Asn) ligase (592 aa).

Glutamate 173 provides a ligand contact to L-aspartate. The interval 197–200 (QLFK) is aspartate. Arginine 219 is a binding site for L-aspartate. ATP is bound by residues 219 to 221 (RDE) and glutamine 228. Residue histidine 451 participates in L-aspartate binding. Glutamate 486 is a binding site for ATP. Arginine 493 lines the L-aspartate pocket. 538 to 541 (GLDR) provides a ligand contact to ATP.

This sequence belongs to the class-II aminoacyl-tRNA synthetase family. Type 1 subfamily. In terms of assembly, homodimer.

It is found in the cytoplasm. It catalyses the reaction tRNA(Asx) + L-aspartate + ATP = L-aspartyl-tRNA(Asx) + AMP + diphosphate. Its function is as follows. Aspartyl-tRNA synthetase with relaxed tRNA specificity since it is able to aspartylate not only its cognate tRNA(Asp) but also tRNA(Asn). Reaction proceeds in two steps: L-aspartate is first activated by ATP to form Asp-AMP and then transferred to the acceptor end of tRNA(Asp/Asn). In Alkalilimnicola ehrlichii (strain ATCC BAA-1101 / DSM 17681 / MLHE-1), this protein is Aspartate--tRNA(Asp/Asn) ligase.